A 432-amino-acid chain; its full sequence is Glutamate-1-semialdehyde 2,1-aminomutase 1 (432 aa).

K268 carries the N6-(pyridoxal phosphate)lysine modification.

Belongs to the class-III pyridoxal-phosphate-dependent aminotransferase family. HemL subfamily. As to quaternary structure, homodimer. Requires pyridoxal 5'-phosphate as cofactor.

It is found in the cytoplasm. The enzyme catalyses (S)-4-amino-5-oxopentanoate = 5-aminolevulinate. The protein operates within porphyrin-containing compound metabolism; protoporphyrin-IX biosynthesis; 5-aminolevulinate from L-glutamyl-tRNA(Glu): step 2/2. The sequence is that of Glutamate-1-semialdehyde 2,1-aminomutase 1 from Bacillus licheniformis (strain ATCC 14580 / DSM 13 / JCM 2505 / CCUG 7422 / NBRC 12200 / NCIMB 9375 / NCTC 10341 / NRRL NRS-1264 / Gibson 46).